The primary structure comprises 511 residues: MEKFEGYSEKHKSRQQYFVYPLLFQEYIYAFAHDYGLNDSEPVEIVSRNNKKFSSLLVKRLIIRMYQQNFGINLVNHPNQDRLLDYKIGFYSEFYSQILSEGFAIVVEIPFSLRELPCPKEKEIPKFQNLRSIHSIFPFLEDTFLHLDYLSHIEIPYPIHLEILVQLLQYRIQDVPSLHLLRFFLNYYSNWNSFITSMKSIFIFKKENKRLFRFLYNSYLSEYEFFLLFLRKQSSCLPLASSGTFLERIHFSRKMEHFGIMYPGFFRKTIWFFMDPLMHYVRYQGKAIFASKGTLFFNKKWKWYLIHLWQYFFSFWTQPRRIHLNQLANSCFDFMGYLSSVPKSPLLVRNQMLENSFLIDTRMPKFDTIVPVTALIGYLSKAQFCTGSGHPISKPIWTDLSDWDILDRFGRICRNLFHYHSGSSKKRTLYRLKYILRLSCARTLARKHKSTVRTFMQRLGSAFLEEFFTEEELVFSLMFTKTTLFSFCGSHSERIWYFDIIRINDLVKPLN.

It belongs to the intron maturase 2 family. MatK subfamily.

The protein resides in the plastid. The protein localises to the chloroplast. In terms of biological role, usually encoded in the trnK tRNA gene intron. Probably assists in splicing its own and other chloroplast group II introns. The protein is Maturase K of Poa pratensis (Kentucky bluegrass).